A 70-amino-acid chain; its full sequence is Sec-independent protein translocase protein TatA (70 aa).

A helical membrane pass occupies residues 1 to 21 (MAIGVNQLLIILVIIVLLFGA).

The protein belongs to the TatA/E family. As to quaternary structure, the Tat system comprises two distinct complexes: a TatABC complex, containing multiple copies of TatA, TatB and TatC subunits, and a separate TatA complex, containing only TatA subunits. Substrates initially bind to the TatABC complex, which probably triggers association of the separate TatA complex to form the active translocon.

It localises to the cell inner membrane. In terms of biological role, part of the twin-arginine translocation (Tat) system that transports large folded proteins containing a characteristic twin-arginine motif in their signal peptide across membranes. TatA could form the protein-conducting channel of the Tat system. The polypeptide is Sec-independent protein translocase protein TatA (Campylobacter curvus (strain 525.92)).